We begin with the raw amino-acid sequence, 1117 residues long: Guanylate cyclase D (1117 aa).

An N-terminal signal peptide occupies residues 1–66 (MAGLQQGCHF…ADSLSLLAWA (66 aa)). Residues 67-479 (RETFTLGVLG…CIRGVQPLGS (413 aa)) lie on the Extracellular side of the membrane. Residues Cys-121 and Cys-149 are joined by a disulfide bond. Residues 480-500 (LLTLTIACVLALVGGFLAYFI) traverse the membrane as a helical segment. At 501 to 1117 (RLGLQQLRLL…RKSGEAGPGP (617 aa)) the chain is on the cytoplasmic side. Residues 529-557 (TPSRRRPHVDSGSESRSVVDGGSPRSVTQ) form a disordered region. The Protein kinase domain maps to 541 to 812 (SESRSVVDGG…PSLDQIYTQF (272 aa)). The interaction with NCALD stretch occupies residues 874-915 (MGTTVEPEYFDQVTIYFSDIVGFTTISALSEPIEVVGFLNDL). Positions 887–1017 (TIYFSDIVGF…DTVNTASRME (131 aa)) constitute a Guanylate cyclase domain. Residues 1096–1117 (GFAKARQGLAEPRKSGEAGPGP) are disordered.

This sequence belongs to the adenylyl cyclase class-4/guanylyl cyclase family. In terms of assembly, interacts (via the catalytic domain) with NCALD. Found in a subset of olfactory neurons in the main olfactory epithelium.

It localises to the cell projection. The protein localises to the cilium membrane. It catalyses the reaction GTP = 3',5'-cyclic GMP + diphosphate. Activated by Ca(2+). Its function is as follows. Functions as an olfactory receptor activated by urine odorants, uroguanylin and guanylin and as well by the volatile semiochemicals carbon disulfide (CS2) and carbon dioxide (CO2). Has guanylate cyclase activity upon binding of the ligand. Activation of GUCY2D neurons leads to the cGMP-dependent activation of the CNGA3 channels, membrane depolarization and an increase in action potential frequency. Signaling pathways activated by GUCY2D may trigger social behaviors such as acquisition of food preference. This is Guanylate cyclase D from Mus musculus (Mouse).